A 555-amino-acid chain; its full sequence is Formate--tetrahydrofolate ligase (555 aa).

ATP is bound at residue 65–72; that stretch reads TPAGEGKT.

Belongs to the formate--tetrahydrofolate ligase family.

The catalysed reaction is (6S)-5,6,7,8-tetrahydrofolate + formate + ATP = (6R)-10-formyltetrahydrofolate + ADP + phosphate. It functions in the pathway one-carbon metabolism; tetrahydrofolate interconversion. This is Formate--tetrahydrofolate ligase from Thermoanaerobacter sp. (strain X514).